Reading from the N-terminus, the 170-residue chain is Small ribosomal subunit protein uS9 (170 aa).

Residues 1 to 47 form a disordered region; it reads MAETTPEQPLEEIDIDSYTTESEVPVEGEYTSESMASAFGEPQPAAG.

This sequence belongs to the universal ribosomal protein uS9 family.

In Streptomyces coelicolor (strain ATCC BAA-471 / A3(2) / M145), this protein is Small ribosomal subunit protein uS9 (rpsI).